A 238-amino-acid chain; its full sequence is Transcriptional activator HAC1 (238 aa).

The segment at 1–39 is disordered; sequence MEMTDFELTSNSQSNLAIPTNFKSTLPPRKRAKTKEEKE. Residues 7-24 are compositionally biased toward polar residues; sequence ELTSNSQSNLAIPTNFKS. The bZIP domain occupies 39 to 102; that stretch reads EQRRIERILR…LTCSHDAFVA (64 aa). The segment at 41 to 61 is basic motif; sequence RRIERILRNRRAAHQSREKKR. The segment at 67-74 is leucine-zipper; the sequence is LERKCSLL. The interval 115–152 is disordered; the sequence is GASLDTRASSHSSSDTFTPSPLNCTMEPATLSPKSMRD. Residues 117–134 are compositionally biased toward low complexity; that stretch reads SLDTRASSHSSSDTFTPS.

Belongs to the bZIP family. In terms of assembly, homodimer.

The protein localises to the nucleus. In terms of biological role, transcriptional activator involved in the unfolded protein response (UPR) pathway. Recognizes and binds to the UPR element (UPRE) in the promoter of UPR-regulated genes such as KAR2, PDI1, EUG1 and FKB2. Increases the synthesis of endoplasmic reticulum-resident proteins required for protein folding as well as components of the secretory pathway. This chain is Transcriptional activator HAC1 (HAC1), found in Saccharomyces cerevisiae (strain ATCC 204508 / S288c) (Baker's yeast).